We begin with the raw amino-acid sequence, 1333 residues long: Inner capsid protein VP1 (1333 aa).

Residues 1 to 10 (MHSTNNNSNK) are compositionally biased toward low complexity. The tract at residues 1–71 (MHSTNNNSNK…QTDGTGLSGT (71 aa)) is disordered. Residues 11-21 (RNNEEKHKQPE) are compositionally biased toward basic and acidic residues. Residues 22-42 (IDSSANNGEGTSGTRAQTVGD) are compositionally biased toward polar residues.

This sequence belongs to the turreted BTV-fold inner capsid family. As to quaternary structure, homodecamer; each decamer is made up of two conformers of VP2, called VP2A and VP2B. 12 homodecamers assemble to form an icosahedral capsid.

It localises to the virion. Its function is as follows. Inner capsid protein that self-assembles to form an icosahedral capsid with a T=2 symmetry, which consists of 120 copies of VP2, with channels at each of its five-fold vertices. This capsid constitutes the innermost concentric layer of the viral mature particle. The protein is Inner capsid protein VP1 of Bombyx mori (Silk moth).